Reading from the N-terminus, the 208-residue chain is Uridine kinase (208 aa).

ATP is bound at residue 11 to 18; sequence GGSGSGKT.

The protein belongs to the uridine kinase family.

Its subcellular location is the cytoplasm. The catalysed reaction is uridine + ATP = UMP + ADP + H(+). It catalyses the reaction cytidine + ATP = CMP + ADP + H(+). It participates in pyrimidine metabolism; CTP biosynthesis via salvage pathway; CTP from cytidine: step 1/3. It functions in the pathway pyrimidine metabolism; UMP biosynthesis via salvage pathway; UMP from uridine: step 1/1. This is Uridine kinase from Staphylococcus carnosus (strain TM300).